The sequence spans 66 residues: Large ribosomal subunit protein bL35 (66 aa).

A compositionally biased stretch (basic residues) spans 1–26 (MPKMKTHRGGAKRVKRTGSGKLKRSR). Disordered stretches follow at residues 1–28 (MPKM…SRAY) and 36–55 (KSTK…KGDQ).

Belongs to the bacterial ribosomal protein bL35 family.

This Macrococcus caseolyticus (strain JCSC5402) (Macrococcoides caseolyticum) protein is Large ribosomal subunit protein bL35.